A 145-amino-acid polypeptide reads, in one-letter code: Monooxygenase AacuP (145 aa).

The protein belongs to the avfA family.

Its pathway is secondary metabolite biosynthesis. Monooxygenase; part of the gene cluster that mediates the biosynthesis of the tetrahydroxanthone dimer secalonic acid D. The pathway begins with the synthesis of atrochrysone thioester by the polyketide synthase AacuL. The atrochrysone carboxyl ACP thioesterase AacuM then breaks the thioester bond and releases the atrochrysone carboxylic acid from AacuL. Atrochrysone carboxylic acid is decarboxylated by the decarboxylase AacuI, and oxidized by the anthrone oxygenase AacuG to yield emodin. Emodin is then reduced to emodin hydroquinone by a yet unidentified oxidoreductase. A-ring reduction by the short chain dehydrogenase AacuN, dehydration by the scytalone dehydratase-like protein AacuK and probable spontaneous re-oxidation, results in overall deoxygenation to chrysophanol. Baeyer-Villiger oxidation by the Baeyer-Villiger monooxygenase (BVMO) AacuH then yields monodictyphenone. Monodictyphenone is transformed into compounds with the tetrahydroxanthone skeleton via methylesterification by the methyltransferase AacuQ, followed by the action of the flavin-dependent monooxygenase AacuC, the isomerase AacuP, and the short chain dehydrogenase/reductase AacuF or AacuD. AacuF and AacuD should accept the same compound as a substrate but perform the ketoreduction with a different stereoselectivity, thus yielding blennolides B and A, respectively. In the final step of the biosynthesis, the cytochrome P450 monooxygenase AacuE accepts blennolide B and/or blennolide A to conduct the dimerization reaction to furnish the tetrahydroxanthone dimers, secalonic acids D, B, and F. This Aspergillus aculeatus (strain ATCC 16872 / CBS 172.66 / WB 5094) protein is Monooxygenase AacuP.